A 473-amino-acid polypeptide reads, in one-letter code: Chaperone SurA (473 aa).

The first 36 residues, 1–36 (MTNDRLFAGIARVLSVRPLAAALALLLTLPLIGVQA), serve as a signal peptide directing secretion. 2 PpiC domains span residues 214-315 (SLAL…KVIE) and 326-425 (ITQT…QVLE).

It is found in the periplasm. The catalysed reaction is [protein]-peptidylproline (omega=180) = [protein]-peptidylproline (omega=0). In terms of biological role, chaperone involved in the correct folding and assembly of outer membrane proteins. Recognizes specific patterns of aromatic residues and the orientation of their side chains, which are found more frequently in integral outer membrane proteins. May act in both early periplasmic and late outer membrane-associated steps of protein maturation. This is Chaperone SurA from Polaromonas sp. (strain JS666 / ATCC BAA-500).